We begin with the raw amino-acid sequence, 290 residues long: Shikimate dehydrogenase (NADP(+)) (290 aa).

Residues 20–22 (SLS) and Thr-67 each bind shikimate. Lys-71 serves as the catalytic Proton acceptor. 2 residues coordinate shikimate: Asn-92 and Asp-107. NADP(+)-binding positions include 130-134 (GAGGA) and Leu-227. Shikimate is bound at residue Tyr-229. An NADP(+)-binding site is contributed by Gly-250.

It belongs to the shikimate dehydrogenase family. Homodimer.

It carries out the reaction shikimate + NADP(+) = 3-dehydroshikimate + NADPH + H(+). Its pathway is metabolic intermediate biosynthesis; chorismate biosynthesis; chorismate from D-erythrose 4-phosphate and phosphoenolpyruvate: step 4/7. Its function is as follows. Involved in the biosynthesis of the chorismate, which leads to the biosynthesis of aromatic amino acids. Catalyzes the reversible NADPH linked reduction of 3-dehydroshikimate (DHSA) to yield shikimate (SA). The polypeptide is Shikimate dehydrogenase (NADP(+)) (Syntrophomonas wolfei subsp. wolfei (strain DSM 2245B / Goettingen)).